The chain runs to 218 residues: MDVTLNEVEVRVLGSLIEKELTTPEYYPLSLNALTNACNQKSNRDPVLNLDEGEVVRALDSLKFKQLALLSGEGGRVPKYRHALMEKLRLDPPELAVLAELLLRGPQTVGELRTRGERMHPFPDLPAIEEVLEELMARTPALVMRLPRQPGRKDSRYAQLFAGEPQTAAEQSPPPEAARLRVVAENERIGHLEEEVVHLRGEVAELRRLVEEFKSQFE.

Belongs to the UPF0502 family.

The sequence is that of UPF0502 protein Geob_1184 from Geotalea daltonii (strain DSM 22248 / JCM 15807 / FRC-32) (Geobacter daltonii).